The sequence spans 407 residues: tRNA-specific 2-thiouridylase MnmA (407 aa).

ATP contacts are provided by residues 20 to 27 (AMSGGVDS) and leucine 46. Cysteine 114 acts as the Nucleophile in catalysis. Cysteines 114 and 210 form a disulfide. Position 138 (glycine 138) interacts with ATP. An interaction with tRNA region spans residues 160–162 (RDQ). The active-site Cysteine persulfide intermediate is the cysteine 210.

This sequence belongs to the MnmA/TRMU family.

It is found in the cytoplasm. The enzyme catalyses S-sulfanyl-L-cysteinyl-[protein] + uridine(34) in tRNA + AH2 + ATP = 2-thiouridine(34) in tRNA + L-cysteinyl-[protein] + A + AMP + diphosphate + H(+). Its function is as follows. Catalyzes the 2-thiolation of uridine at the wobble position (U34) of tRNA, leading to the formation of s(2)U34. The protein is tRNA-specific 2-thiouridylase MnmA of Bartonella tribocorum (strain CIP 105476 / IBS 506).